The chain runs to 371 residues: MNPPGTFHITATDGSARTGVLYTAHGIVNTPIFMPVGTVGSVKAIAPDDLEAISAEIILGNTYHLYLRPGDELIARRGGLHVFNAWEKPILTDSGGFQIFSLSSLRKLHKDGVIFRSHIDGSKHVFTPERVITIQRNLNSDIMMVLDECVAANADYTYTAQSLDLTIHWAKRSRDVYPKGEGDNLLFGIVQGGMFKSLRHSSVSQLIDLDFDGYAIGGLSVGEPKEIMMELLYDTAPLLPKTKPRYLMGVGTPLDILKGIEAGVDMFDCVLPTRNARNGTLYTSQGKLNIKRKEYAEDDLPLDENCSCYTCQTFSRAYLRHLFHSQELLAFRLNSIHNLTYFLNIIFGARKAIHGGYFFNYKQQVEQLYCN.

Aspartate 93 serves as the catalytic Proton acceptor. Substrate-binding positions include 93–97 (DSGGF), aspartate 147, glutamine 191, and glycine 218. The segment at 249-255 (GVGTPLD) is RNA binding. The active-site Nucleophile is the aspartate 268. Residues 273–277 (TRNAR) form an RNA binding; important for wobble base 34 recognition region. The Zn(2+) site is built by cysteine 306, cysteine 308, cysteine 311, and histidine 337.

It belongs to the queuine tRNA-ribosyltransferase family. In terms of assembly, homodimer. Within each dimer, one monomer is responsible for RNA recognition and catalysis, while the other monomer binds to the replacement base PreQ1. It depends on Zn(2+) as a cofactor.

It catalyses the reaction 7-aminomethyl-7-carbaguanine + guanosine(34) in tRNA = 7-aminomethyl-7-carbaguanosine(34) in tRNA + guanine. It participates in tRNA modification; tRNA-queuosine biosynthesis. In terms of biological role, catalyzes the base-exchange of a guanine (G) residue with the queuine precursor 7-aminomethyl-7-deazaguanine (PreQ1) at position 34 (anticodon wobble position) in tRNAs with GU(N) anticodons (tRNA-Asp, -Asn, -His and -Tyr). Catalysis occurs through a double-displacement mechanism. The nucleophile active site attacks the C1' of nucleotide 34 to detach the guanine base from the RNA, forming a covalent enzyme-RNA intermediate. The proton acceptor active site deprotonates the incoming PreQ1, allowing a nucleophilic attack on the C1' of the ribose to form the product. After dissociation, two additional enzymatic reactions on the tRNA convert PreQ1 to queuine (Q), resulting in the hypermodified nucleoside queuosine (7-(((4,5-cis-dihydroxy-2-cyclopenten-1-yl)amino)methyl)-7-deazaguanosine). The polypeptide is Queuine tRNA-ribosyltransferase (Lawsonia intracellularis (strain PHE/MN1-00)).